Consider the following 409-residue polypeptide: LIM/homeobox protein ttx-3 (409 aa).

2 consecutive LIM zinc-binding domains span residues 108–169 and 171–232; these read NQCC…RYQK and CRKC…VRST. Disordered regions lie at residues 245 to 299 and 372 to 409; these read AVVA…RTSF and MNPP…YTHL. The segment covering 247 to 267 has biased composition (pro residues); it reads VAPPPPPPTTTTAPPPAAPEQ. Residues 292–351 constitute a DNA-binding region (homeobox); it reads SKRMRTSFKHHQLRAMKTYFALNHNPDAKDLKQLAAKTNLTKRVLQVWFQNARAKYRREL. The span at 382–409 shows a compositional bias: polar residues; sequence GHSTDGYQLNTPPLSSEIYSPNSNYTHL.

Expressed in the AIA, AIN and AIY interneurons, and in the NSM neurons. Expressed also in ADL and ASI sensory neurons in 60-70% of L2 larvae. Expression is also detected in head muscles of embryos and some early larvae but not late larvae or adults.

Its subcellular location is the nucleus. It is found in the perikaryon. The protein resides in the cell projection. The protein localises to the axon. Transcription factor. Binds to a sequence motif, 5'-TTATTGGCTTCGTTAA-3', which may be involved in AIY interneuron function, in the regulatory elements of target genes; binding is more efficient, in vitro, together with homeobox protein ceh-10. Required for specification of the AIA and AIY interneurons and the NSM neurons. Positively regulates the expression of a number of genes including ceh-10, ceh-23, kal-1, hen-1, ser-2, unc-17 and sra-11 in AIY neurons, and cat-4, flp-4, bas-1, ptps-1 and mgl-1 in NSM neurons. In concert with WNT/beta-catenin signaling, initiates expression of homeobox ceh-10 in AIY, but not in the sister cells, SMDD motor neurons. Also acts in an autoregulatory feedback loop to maintain its own expression. Plays a role in the thermotactic response, olfactory imprinting, regulation of longevity, control of dauer formation and axon outgrowth and pathfinding. Not required for normal chemosensory behavior. The sequence is that of LIM/homeobox protein ttx-3 from Caenorhabditis elegans.